Reading from the N-terminus, the 207-residue chain is ATP-dependent Clp protease proteolytic subunit (207 aa).

Residue Ser111 is the Nucleophile of the active site. His136 is a catalytic residue.

This sequence belongs to the peptidase S14 family. Fourteen ClpP subunits assemble into 2 heptameric rings which stack back to back to give a disk-like structure with a central cavity, resembling the structure of eukaryotic proteasomes.

It is found in the cytoplasm. The enzyme catalyses Hydrolysis of proteins to small peptides in the presence of ATP and magnesium. alpha-casein is the usual test substrate. In the absence of ATP, only oligopeptides shorter than five residues are hydrolyzed (such as succinyl-Leu-Tyr-|-NHMec, and Leu-Tyr-Leu-|-Tyr-Trp, in which cleavage of the -Tyr-|-Leu- and -Tyr-|-Trp bonds also occurs).. Its function is as follows. Cleaves peptides in various proteins in a process that requires ATP hydrolysis. Has a chymotrypsin-like activity. Plays a major role in the degradation of misfolded proteins. The sequence is that of ATP-dependent Clp protease proteolytic subunit from Yersinia enterocolitica serotype O:8 / biotype 1B (strain NCTC 13174 / 8081).